The sequence spans 140 residues: Lysozyme c-1 (140 aa).

The first 20 residues, 1-20, serve as a signal peptide directing secretion; the sequence is MKVFSTVLLAIVACCAVAEA. The C-type lysozyme domain maps to 21-140; the sequence is KTFGKCELAK…KKLPNVSSCF (120 aa). 4 cysteine pairs are disulfide-bonded: Cys-26/Cys-139, Cys-47/Cys-128, Cys-81/Cys-94, and Cys-90/Cys-108. Residues Glu-52 and Asp-69 contribute to the active site.

It belongs to the glycosyl hydrolase 22 family. As to expression, expressed in salivary glands and Malpighian tubules.

It carries out the reaction Hydrolysis of (1-&gt;4)-beta-linkages between N-acetylmuramic acid and N-acetyl-D-glucosamine residues in a peptidoglycan and between N-acetyl-D-glucosamine residues in chitodextrins.. Lysozymes have primarily a bacteriolytic function; those in tissues and body fluids are associated with the monocyte-macrophage system and enhance the activity of immunoagents. The protein is Lysozyme c-1 of Anopheles gambiae (African malaria mosquito).